Here is a 152-residue protein sequence, read N- to C-terminus: MTITDLVLILFIAALLAFAIYDQFIMPRRNGPTLLAIPLLRRGRIDSVIFVGLIVILIYNNVTNHGALITTWLLSALALMGFYIFWIRVPKIIFKQKGFFFANVWIEYSLIKAMNLSEDGVLVMQLEQRRLLIRVRNIDNLEKIYKLIVSTQ.

A run of 3 helical transmembrane segments spans residues 6–26 (LVLI…QFIM), 45–65 (IDSV…VTNH), and 67–87 (ALIT…IFWI).

It belongs to the UPF0266 family.

Its subcellular location is the cell inner membrane. This Shigella boydii serotype 18 (strain CDC 3083-94 / BS512) protein is UPF0266 membrane protein YobD.